Reading from the N-terminus, the 327-residue chain is Probable cytosolic iron-sulfur protein assembly protein CIAO1 homolog (327 aa).

7 WD repeats span residues 3–42 (GHEDRVWSVAWSPNGFVLASCGGDKTIRIWGKEGDKWICK), 48–87 (GHQRTIRSLGWSPCGTFLASASFDATTCIWDQKSGEFECN), 92–131 (GHENEVKSVDWSVSGSLLATCGRDKSVWIWEVQEDDEYEC), 137–176 (SHTQDVKKVVWHPTKEILASCSYDDTIKLYKEDEDDWSCC), 181–220 (GHESTVWSISFDGSGDRIVSCSDDKTVRIWKSYPPGNQEG), 239–278 (YHDRTIYDVHWSKVSGLIATASGDDCIRIFKEDTNSDRNQ), and 290–327 (AHSMDVNSICWHPKDENILATCSDDGTVKLWRFTPAEE).

Belongs to the WD repeat CIA1 family.

Functionally, essential component of the cytosolic iron-sulfur (Fe/S) protein assembly machinery. Required for the maturation of extramitochondrial Fe/S proteins. This Nematostella vectensis (Starlet sea anemone) protein is Probable cytosolic iron-sulfur protein assembly protein CIAO1 homolog.